Here is a 161-residue protein sequence, read N- to C-terminus: Phosphopantetheine adenylyltransferase (161 aa).

Serine 9 is a binding site for substrate. Residues 9-10 (SF) and histidine 17 each bind ATP. Positions 41, 73, and 87 each coordinate substrate. ATP contacts are provided by residues 88 to 90 (GIR), glutamate 98, and 123 to 129 (TGFISST).

This sequence belongs to the bacterial CoaD family. In terms of assembly, homohexamer. The cofactor is Mg(2+).

It is found in the cytoplasm. The catalysed reaction is (R)-4'-phosphopantetheine + ATP + H(+) = 3'-dephospho-CoA + diphosphate. Its pathway is cofactor biosynthesis; coenzyme A biosynthesis; CoA from (R)-pantothenate: step 4/5. Functionally, reversibly transfers an adenylyl group from ATP to 4'-phosphopantetheine, yielding dephospho-CoA (dPCoA) and pyrophosphate. The protein is Phosphopantetheine adenylyltransferase of Psychromonas ingrahamii (strain DSM 17664 / CCUG 51855 / 37).